The following is an 802-amino-acid chain: Ribosomal protein S6 kinase alpha-5 (802 aa).

Residues 1–22 (MEEEGGSSGGAAGTSADGGDGG) are compositionally biased toward gly residues. Residues 1-23 (MEEEGGSSGGAAGTSADGGDGGE) form a disordered region. A Protein kinase 1 domain is found at 49 to 318 (FELLKVLGTG…ADEIKEHLFF (270 aa)). ATP-binding positions include 55-63 (LGTGAYGKV) and Lys-81. The active-site Proton acceptor is the Asp-177. Position 212 is a phosphoserine; by autocatalysis (Ser-212). One can recognise an AGC-kinase C-terminal domain in the interval 319–387 (QKINWDDLAA…VAPSILFKRN (69 aa)). A Phosphoserine; by MAPK1, MAPK3 and MAPK14 modification is found at Ser-360. Phosphoserine; by autocatalysis occurs at positions 376 and 381. The Protein kinase 2 domain maps to 426–687 (DLKDKPLGEG…MSGLRYNEWL (262 aa)). Residues 432-440 (LGEGSFSIC) and Lys-455 each bind ATP. Residue Asp-544 is the Proton acceptor of the active site. At Thr-581 the chain carries Phosphothreonine; by MAPK1, MAPK3 and MAPK14. Phosphoserine occurs at positions 647, 657, 691, and 695. Thr-700 is subject to Phosphothreonine; by MAPK1, MAPK3 and MAPK14. The disordered stretch occupies residues 741–802 (AKRRKMKKTS…TLFQFSDSVA (62 aa)). Over residues 749-779 (TSTSTETRSSSSESSHSSSSHSHGKTTPTKT) the composition is skewed to low complexity. Residues Ser-750, Ser-752, and Ser-758 each carry the phosphoserine; by autocatalysis modification. Positions 780-802 (LQPSNPADSNNPETLFQFSDSVA) are enriched in polar residues. Phosphoserine is present on Ser-798.

The protein belongs to the protein kinase superfamily. AGC Ser/Thr protein kinase family. S6 kinase subfamily. Forms a complex with either MAPK1/ERK2 or MAPK3/ERK1 in quiescent cells which transiently dissociates following mitogenic stimulation. Also associates with MAPK14/p38-alpha. Activated RPS6KA5 associates with and phosphorylates the NF-kappa-B p65 subunit RELA. Interacts with CREBBP and EP300. It depends on Mg(2+) as a cofactor. In terms of processing, ser-376 and Thr-581 phosphorylation is required for kinase activity. Ser-376 and Ser-212 are autophosphorylated by the C-terminal kinase domain, and their phosphorylation is essential for the catalytic activity of the N-terminal kinase domain. Phosphorylated at Ser-360, Thr-581 and Thr-700 by MAPK1/ERK2, MAPK3/ERK1 and MAPK14/p38-alpha. Autophosphorylated at Ser-750, Ser-752 and Ser-758 by the N-terminal kinase domain. Ubiquitinated.

It is found in the nucleus. It catalyses the reaction L-seryl-[protein] + ATP = O-phospho-L-seryl-[protein] + ADP + H(+). It carries out the reaction L-threonyl-[protein] + ATP = O-phospho-L-threonyl-[protein] + ADP + H(+). With respect to regulation, activated by phosphorylation at Ser-360, Thr-581 and Thr-700 by MAPK1/ERK2, MAPK3/ERK1 and MAPK14/p38-alpha, and by further autophosphorylation of Ser-212, Ser-376 and Ser-381 by the activated C-terminal kinase domain. The active N-terminal kinase domain finally phosphorylates downstream substrates, as well as Ser-750, Ser-752 and Ser-758 in its own C-terminal region. Serine/threonine-protein kinase that is required for the mitogen or stress-induced phosphorylation of the transcription factors CREB1 and ATF1 and for the regulation of the transcription factors RELA, STAT3 and ETV1/ER81, and that contributes to gene activation by histone phosphorylation and functions in the regulation of inflammatory genes. Phosphorylates CREB1 and ATF1 in response to mitogenic or stress stimuli such as UV-C irradiation, epidermal growth factor (EGF) and anisomycin. Plays an essential role in the control of RELA transcriptional activity in response to TNF and upon glucocorticoid, associates in the cytoplasm with the glucocorticoid receptor NR3C1 and contributes to RELA inhibition and repression of inflammatory gene expression. In skeletal myoblasts is required for phosphorylation of RELA at 'Ser-276' during oxidative stress. In erythropoietin-stimulated cells, is necessary for the 'Ser-727' phosphorylation of STAT3 and regulation of its transcriptional potential. Phosphorylates ETV1/ER81 at 'Ser-191' and 'Ser-216', and thereby regulates its ability to stimulate transcription, which may be important during development and breast tumor formation. Directly represses transcription via phosphorylation of 'Ser-1' of histone H2A. Phosphorylates 'Ser-10' of histone H3 in response to mitogenics, stress stimuli and EGF, which results in the transcriptional activation of several immediate early genes, including proto-oncogenes c-fos/FOS and c-jun/JUN. May also phosphorylate 'Ser-28' of histone H3. Mediates the mitogen- and stress-induced phosphorylation of high mobility group protein 1 (HMGN1/HMG14). In lipopolysaccharide-stimulated primary macrophages, acts downstream of the Toll-like receptor TLR4 to limit the production of pro-inflammatory cytokines. Functions probably by inducing transcription of the MAP kinase phosphatase DUSP1 and the anti-inflammatory cytokine interleukin 10 (IL10), via CREB1 and ATF1 transcription factors. Plays a role in neuronal cell death by mediating the downstream effects of excitotoxic injury. Phosphorylates TRIM7 at 'Ser-107' in response to growth factor signaling via the MEK/ERK pathway, thereby stimulating its ubiquitin ligase activity. This is Ribosomal protein S6 kinase alpha-5 (RPS6KA5) from Pongo abelii (Sumatran orangutan).